Here is a 238-residue protein sequence, read N- to C-terminus: Uracil-DNA glycosylase (238 aa).

Asp-72 acts as the Proton acceptor in catalysis.

This sequence belongs to the uracil-DNA glycosylase (UDG) superfamily. UNG family.

It is found in the cytoplasm. The enzyme catalyses Hydrolyzes single-stranded DNA or mismatched double-stranded DNA and polynucleotides, releasing free uracil.. Its function is as follows. Excises uracil residues from the DNA which can arise as a result of misincorporation of dUMP residues by DNA polymerase or due to deamination of cytosine. The protein is Uracil-DNA glycosylase of Chromobacterium violaceum (strain ATCC 12472 / DSM 30191 / JCM 1249 / CCUG 213 / NBRC 12614 / NCIMB 9131 / NCTC 9757 / MK).